The chain runs to 264 residues: Thymidylate synthase (264 aa).

Arg-21 serves as a coordination point for dUMP. His-51 provides a ligand contact to (6R)-5,10-methylene-5,6,7,8-tetrahydrofolate. 126–127 (RR) contributes to the dUMP binding site. Cys-146 serves as the catalytic Nucleophile. DUMP is bound by residues 166 to 169 (RSCD), Asn-177, and 207 to 209 (HLY). Residue Asp-169 coordinates (6R)-5,10-methylene-5,6,7,8-tetrahydrofolate. Ala-263 contacts (6R)-5,10-methylene-5,6,7,8-tetrahydrofolate.

Belongs to the thymidylate synthase family. Bacterial-type ThyA subfamily. Homodimer.

It localises to the cytoplasm. The enzyme catalyses dUMP + (6R)-5,10-methylene-5,6,7,8-tetrahydrofolate = 7,8-dihydrofolate + dTMP. It functions in the pathway pyrimidine metabolism; dTTP biosynthesis. Catalyzes the reductive methylation of 2'-deoxyuridine-5'-monophosphate (dUMP) to 2'-deoxythymidine-5'-monophosphate (dTMP) while utilizing 5,10-methylenetetrahydrofolate (mTHF) as the methyl donor and reductant in the reaction, yielding dihydrofolate (DHF) as a by-product. This enzymatic reaction provides an intracellular de novo source of dTMP, an essential precursor for DNA biosynthesis. This chain is Thymidylate synthase, found in Escherichia coli (strain 55989 / EAEC).